We begin with the raw amino-acid sequence, 314 residues long: tRNA pseudouridine synthase B (314 aa).

H43 lines the substrate pocket. Catalysis depends on D48, which acts as the Nucleophile. The substrate site is built by Y76, Y179, and L200.

This sequence belongs to the pseudouridine synthase TruB family. Type 1 subfamily.

It catalyses the reaction uridine(55) in tRNA = pseudouridine(55) in tRNA. Its function is as follows. Responsible for synthesis of pseudouridine from uracil-55 in the psi GC loop of transfer RNAs. This Shigella boydii serotype 4 (strain Sb227) protein is tRNA pseudouridine synthase B.